A 666-amino-acid chain; its full sequence is Collagen alpha-1(XXV) chain (666 aa).

Residues 1-24 (MLVKKLAGKGGGRESGSEDPRPLG) form a disordered region. The Cytoplasmic portion of the chain corresponds to 1 to 33 (MLVKKLAGKGGGRESGSEDPRPLGQRCAGTMPS). A compositionally biased stretch (basic and acidic residues) spans 11 to 21 (GGRESGSEDPR). A helical; Signal-anchor for type II membrane protein membrane pass occupies residues 34 to 54 (CTALATLLSVVAVAFCFYLGV). Residues 55-666 (KTNDLQARIA…GLPMPGCWQK (612 aa)) lie on the Extracellular side of the membrane. Positions 116-168 (LECNCPAGPPGKRGKRGRRGESGPPGQPGPQGPPGPKGDKGEQGDQGPRMVFP) are disordered. The 44-residue stretch at 121–164 (PAGPPGKRGKRGRRGESGPPGQPGPQGPPGPKGDKGEQGDQGPR) folds into the Collagen-like 1 domain. The span at 140 to 151 (PGQPGPQGPPGP) shows a compositional bias: pro residues. The interaction with amyloid-beta peptide stretch occupies residues 181–188 (LIKRRLIK). Disordered regions lie at residues 189 to 428 (GDQG…ATEI) and 445 to 666 (LTVT…CWQK). Collagen-like domains follow at residues 192-247 (GQAG…QKGS), 249-308 (GAPG…PGSS), 311-370 (GIKG…AGPP), 373-425 (GERG…DPGA), 455-514 (GPQG…KGEK), 529-588 (GPPG…KGAM), and 589-648 (GEPG…DGLD). Pro residues predominate over residues 196–208 (PPGPPGPPGPRGP). Over residues 230-245 (PGEQGLMGPLGPPGQK) the composition is skewed to low complexity. Residues 280–290 (EPGKEGEKGDA) show a composition bias toward basic and acidic residues. Residues 336 to 358 (LPGIKGEPGFIGPQGEPGLPGLP) are compositionally biased toward low complexity. Composition is skewed to basic and acidic residues over residues 361–377 (KGDR…ERGD) and 398–407 (SKGDRGDKGD). The span at 457-466 (QGLQGPKGEQ) shows a compositional bias: low complexity. Over residues 494–503 (GEKGGLGLPG) the composition is skewed to gly residues. Residues 528-543 (IGPPGPPGPHGPPGPM) show a composition bias toward pro residues. Residues 615 to 638 (RGEKGDLGEKGEKGFRGVKGEKGE) show a composition bias toward basic and acidic residues.

As to quaternary structure, forms homodimers and homotrimers. Binds to the fibrillized forms of amyloid-beta protein 40 (beta-APP40) and amyloid-betad protein 42 (beta-APP42). Found associated with beta-APP42 more frequently than with beta-APP40. In terms of processing, undergoes proteolytic cleavage by furin protease to yield the soluble collagen-like Alzheimer amyloid plaque component. Glycosylated. Post-translationally, hydroxylated on proline and lysine residues. As to expression, expressed predominantly in neurons with low levels also detected in heart, testis and eye.

The protein resides in the membrane. Its function is as follows. Inhibits fibrillization of amyloid-beta peptide during the elongation phase. Has also been shown to assemble amyloid fibrils into protease-resistant aggregates. Binds heparin. The polypeptide is Collagen alpha-1(XXV) chain (Mus musculus (Mouse)).